Reading from the N-terminus, the 530-residue chain is S-adenosylhomocysteine hydrolase-like protein 1 (530 aa).

Residue Met-1 is modified to N-acetylmethionine. Ser-2 is subject to N-acetylserine. Ser-2 carries the post-translational modification Phosphoserine. Lys-40 is subject to N6-acetyllysine. The tract at residues 53 to 103 (KFPTKTGRRSLSRSISQSSTDSYSSAASYTDSSDDEVSPREKQQTNSKGSS) is disordered. Positions 64-83 (SRSISQSSTDSYSSAASYTD) are enriched in low complexity. The tract at residues 65–92 (RSISQSSTDSYSSAASYTDSSDDEVSPR) is PEST. Ser-68, Ser-71, Ser-74, Ser-77, and Ser-84 each carry phosphoserine. The tract at residues 138–201 (QGEKPLAGAK…EAGVAVFAWK (64 aa)) is interaction with BCL2L10. Substrate-binding residues include Thr-155, Asp-229, Glu-254, Lys-284, and Asp-288. Positions 281–448 (SVTKQKFDNL…EGRLLNLSCS (168 aa)) are NAD binding. NAD(+)-binding positions include 318–322 (GYGEV), Glu-341, and Asn-376. At Ser-391 the chain carries Phosphoserine. Residue 397-399 (MGH) participates in NAD(+) binding. The interval 520 to 530 (NGPFKPNYYRY) is PDZ-binding.

This sequence belongs to the adenosylhomocysteinase family. Forms multimers. Forms heteromultimers with AHCYL2 (via the C-terminal region). Interacts (when phosphorylated) with ITPR1 (when not phosphorylated); the interaction suppresses inositol 1,4,5-trisphosphate binding to ITPR1. Interacts with BCL2L10; this strengthens the interaction of AHCYL1 with ITPR1. Interacts with CFTR and SLC26A6; the interactions take place once AHCYL1 is released from ITPR1 and increase CFTR and SLC26A6 activities. Interacts with RRM1; in a phosphorylation- and (dATP)-dependent manner. Interacts (via PEST domain when phosphorylated) with SLC4A4 isoform 1 but not isoform 2; the interaction increases SLC4A4 isoform 1 activity. Interacts (when phosphorylated) with SLC9A3; the interaction is required for SLC9A3 apical location and activity. Interacts (when phosphorylated) with FIP1L1; the interaction is direct and associates AHCYL1 with the CPSF complex and RNA. Interacts with PAPOLA. Interacts with ZCCHC4. Interacts with AHCY. It depends on NAD(+) as a cofactor. In terms of processing, phosphorylated at Ser/Thr residues between Ser-68 and Thr-72 in the PEST region: required for interaction with dATP-bound RRM1 and ITPR1. Phosphorylation at Ser-68 by PRKD1 and CAMK4 is required for further phosphorylations by CSNK1A1. Phosphorylation is induced by oxidative stress. Probably phosphorylated by CAMK2A; phosphorylation at Ser-68 may be required for interaction with SLC9A3. Dephosphorylated in response to apoptotic stress conditions which causes translocation of both AHCYL1 and BCL2L10 from mitochondria-associated endoplasmic reticulum membranes and promotes apoptosis. In terms of tissue distribution, expressed in dendritic cells.

Its subcellular location is the endoplasmic reticulum. The protein localises to the cytoplasm. It localises to the cytosol. The protein resides in the apical cell membrane. It is found in the microsome. Functionally, multifaceted cellular regulator which coordinates several essential cellular functions including regulation of epithelial HCO3(-) and fluid secretion, mRNA processing and DNA replication. Regulates ITPR1 sensitivity to inositol 1,4,5-trisphosphate, competing for the common binding site and acting as endogenous 'pseudoligand' whose inhibitory activity can be modulated by its phosphorylation status. Promotes the formation of contact points between the endoplasmic reticulum (ER) and mitochondria, facilitating transfer of Ca(2+) from the ER to mitochondria. Under normal cellular conditions, functions cooperatively with BCL2L10 to limit ITPR1-mediated Ca(2+) release but, under apoptotic stress conditions, dephosphorylated which promotes dissociation of both AHCYL1 and BCL2L10 from mitochondria-associated endoplasmic reticulum membranes, inhibits BCL2L10 interaction with ITPR1 and leads to increased Ca(2+) transfer to mitochondria which promotes apoptosis. In the pancreatic and salivary ducts, at resting state, attenuates inositol 1,4,5-trisphosphate-induced calcium release by interacting with ITPR1. When extracellular stimuli induce ITPR1 phosphorylation or inositol 1,4,5-trisphosphate production, dissociates from ITPR1 to interact with CFTR and SLC26A6, mediating their synergistic activation by calcium and cAMP that stimulates the epithelial secretion of electrolytes and fluid. Also activates basolateral SLC4A4 isoform 1 to coordinate fluid and HCO3(-) secretion. Inhibits the effect of STK39 on SLC4A4 and CFTR by recruiting PP1 phosphatase which activates SLC4A4, SLC26A6 and CFTR through dephosphorylation. Mediates the induction of SLC9A3 surface expression produced by Angiotensin-2. Depending on the cell type, activates SLC9A3 in response to calcium or reverses SLC9A3R2-dependent calcium inhibition. May modulate the polyadenylation state of specific mRNAs, both by controlling the subcellular location of FIP1L1 and by inhibiting PAPOLA activity, in response to a stimulus that alters its phosphorylation state. Acts as a (dATP)-dependent inhibitor of ribonucleotide reductase large subunit RRM1, controlling the endogenous dNTP pool and ensuring normal cell cycle progression. In vitro does not exhibit any S-adenosyl-L-homocysteine hydrolase activity. In Homo sapiens (Human), this protein is S-adenosylhomocysteine hydrolase-like protein 1.